The following is a 399-amino-acid chain: Phosphoglycerate kinase (399 aa).

Substrate-binding positions include 21–23 (DFN), Arg36, 59–62 (HLGR), Arg120, and Arg158. ATP is bound by residues Lys209, Gly297, Glu328, and 355–358 (GGDS).

This sequence belongs to the phosphoglycerate kinase family. As to quaternary structure, monomer.

It is found in the cytoplasm. It catalyses the reaction (2R)-3-phosphoglycerate + ATP = (2R)-3-phospho-glyceroyl phosphate + ADP. It functions in the pathway carbohydrate degradation; glycolysis; pyruvate from D-glyceraldehyde 3-phosphate: step 2/5. This is Phosphoglycerate kinase from Streptococcus thermophilus (strain ATCC BAA-491 / LMD-9).